The following is a 1893-amino-acid chain: CDK5 regulatory subunit-associated protein 2 (1893 aa).

Residues 51–94 (TVSPTRARNMKDFENQITELKKENFNLKLRIYFLEERMQQEFHG) are CM1 motif; interacts with the gTuRC. Residues 58 to 196 (RNMKDFENQI…TEKALRLRLE (139 aa)) are interaction with NCKAP5L. Residue serine 547 is modified to Phosphoserine. The tract at residues 926–1208 (PGITNREAKK…LENLKQQLEE (283 aa)) is interaction with MAPRE1. The residue at position 1001 (threonine 1001) is a Phosphothreonine. Disordered stretches follow at residues 1015–1071 (AAYQ…NPED) and 1084–1105 (SKSQ…SINT). Basic and acidic residues predominate over residues 1034–1048 (WRDKEMDSDQQRSYE). Position 1238 is a phosphoserine (serine 1238). The interval 1347–1381 (LPESPEPSASHALSDYETSEKSFFSRDQKQDNETE) is disordered. Positions 1364 to 1381 (TSEKSFFSRDQKQDNETE) are enriched in basic and acidic residues. Residue serine 1490 is modified to Phosphoserine. Composition is skewed to basic and acidic residues over residues 1500-1519 (SVKE…ERHN) and 1651-1661 (PDKHDGDKYPM). Disordered stretches follow at residues 1500 to 1521 (SVKE…HNQQ), 1646 to 1706 (EVPL…ATST), and 1754 to 1774 (QTQE…PHPA). Residues serine 1663 and serine 1666 each carry the phosphoserine modification. Composition is skewed to polar residues over residues 1663 to 1706 (SDNS…ATST) and 1754 to 1766 (QTQE…SQEL). An interaction with CDK5R1 region spans residues 1726-1768 (HVLGLIEDYEALLKQISQGQRLLAEMDIQTQEAPSSTSQELGT). The interval 1726–1893 (HVLGLIEDYE…GTCSPSRPGS (168 aa)) is interaction with PCNT and AKAP9. The segment at 1861–1870 (VVTHKILRKA) is required for centrosomal attachment, Golgi localization and CALM1 interaction. Serine 1893 is modified (phosphoserine).

Homodimer. Interacts with CDK5R1 (p35 form). CDK5RAP1, CDK5RAP2 and CDK5RAP3 show competitive binding to CDK5R1. May form a complex with CDK5R1 and CDK5. Interacts with pericentrin/PCNT; the interaction is leading to centrosomal and Golgi localization of CDK5RAP2 and PCNT. Interacts with AKAP9; the interaction targets CDK5RAP2 and AKAP9 to Golgi apparatus. Interacts with MAPRE1; the interaction is direct and targets CDK5RAP2 and EB1/MAPRE1 to microtubule plus ends. Interacts with TUBG1; the interaction is leading to the centrosomal localization of CDK5RAP2 and TUBG1. Interacts with TUBGCP3. Interacts with CALM1. Interacts with CDC20. Interacts with CEP68; degradation of CEP68 in early mitosis leads to removal of CDK5RAP2 from the centrosome which promotes centriole disengagement and subsequent centriole separation. Interacts with NCKAP5L. Forms a pericentrosomal complex with AKAP9, MAPRE1 and PDE4DIP isoform 13/MMG8/SMYLE; within this complex, MAPRE1 binding to CDK5RAP2 may be mediated by PDE4DIP. Interacts with LGALS3BP; this interaction may connect the pericentrosomal complex to the gamma-tubulin ring complex (gTuRC) to promote microtubule assembly and acetylation. Interacts with CCDC66. Associates (via CM1 motif) with TUBGCP2 of the gTuRC; the interaction plays a role in gTuRC activation. Phosphorylated in vitro by CDK5. Widely expressed. Expressed in heart, brain, placenta, lung, liver, skeletal muscle, kidney and pancreas.

It is found in the cytoplasm. Its subcellular location is the cytoskeleton. It localises to the microtubule organizing center. The protein resides in the centrosome. The protein localises to the golgi apparatus. Functionally, potential regulator of CDK5 activity via its interaction with CDK5R1. Negative regulator of centriole disengagement (licensing) which maintains centriole engagement and cohesion. Involved in regulation of mitotic spindle orientation. Plays a role in the spindle checkpoint activation by acting as a transcriptional regulator of both BUBR1 and MAD2 promoter. Together with EB1/MAPRE1, may promote microtubule polymerization, bundle formation, growth and dynamics at the plus ends. Regulates centrosomal maturation by recruitment of the gamma-tubulin ring complex (gTuRC) onto centrosomes. In complex with PDE4DIP isoform 13/MMG8/SMYLE, MAPRE1 and AKAP9, contributes to microtubules nucleation and extension from the centrosome to the cell periphery. Required for the recruitment of AKAP9 to centrosomes. Plays a role in neurogenesis. In Homo sapiens (Human), this protein is CDK5 regulatory subunit-associated protein 2 (CDK5RAP2).